A 274-amino-acid polypeptide reads, in one-letter code: Large ribosomal subunit protein uL2cy (274 aa).

Disordered regions lie at residues 1–25 (MAIH…VKSN) and 223–274 (MNPV…RRSK). Residues 7 to 25 (KTSTPSTRNGTVDSQVKSN) are compositionally biased toward polar residues.

This sequence belongs to the universal ribosomal protein uL2 family. In terms of assembly, part of the 50S ribosomal subunit.

The protein localises to the plastid. It is found in the chloroplast. This is Large ribosomal subunit protein uL2cy (rpl2-B) from Atropa belladonna (Belladonna).